A 562-amino-acid polypeptide reads, in one-letter code: NAD-dependent malic enzyme (562 aa).

Tyr101 functions as the Proton donor in the catalytic mechanism. Arg154 serves as a coordination point for NAD(+). Lys172 functions as the Proton acceptor in the catalytic mechanism. A divalent metal cation-binding residues include Glu243, Asp244, and Asp267. The NAD(+) site is built by Asp267 and Asn415.

This sequence belongs to the malic enzymes family. As to quaternary structure, homotetramer. Requires Mg(2+) as cofactor. It depends on Mn(2+) as a cofactor.

The catalysed reaction is (S)-malate + NAD(+) = pyruvate + CO2 + NADH. It carries out the reaction oxaloacetate + H(+) = pyruvate + CO2. The polypeptide is NAD-dependent malic enzyme (Shewanella denitrificans (strain OS217 / ATCC BAA-1090 / DSM 15013)).